The sequence spans 507 residues: ATP synthase subunit alpha, chloroplastic (507 aa).

170–177 lines the ATP pocket; sequence GDRQTGKT.

This sequence belongs to the ATPase alpha/beta chains family. In terms of assembly, F-type ATPases have 2 components, CF(1) - the catalytic core - and CF(0) - the membrane proton channel. CF(1) has five subunits: alpha(3), beta(3), gamma(1), delta(1), epsilon(1). CF(0) has four main subunits: a, b, b' and c.

It localises to the plastid. The protein resides in the chloroplast thylakoid membrane. It carries out the reaction ATP + H2O + 4 H(+)(in) = ADP + phosphate + 5 H(+)(out). Its function is as follows. Produces ATP from ADP in the presence of a proton gradient across the membrane. The alpha chain is a regulatory subunit. In Atropa belladonna (Belladonna), this protein is ATP synthase subunit alpha, chloroplastic.